We begin with the raw amino-acid sequence, 199 residues long: Thymidylate kinase (199 aa).

7–14 (GIDGSGKS) contacts ATP.

The protein belongs to the thymidylate kinase family.

The enzyme catalyses dTMP + ATP = dTDP + ADP. Functionally, phosphorylation of dTMP to form dTDP in both de novo and salvage pathways of dTTP synthesis. The polypeptide is Thymidylate kinase (Thermosipho melanesiensis (strain DSM 12029 / CIP 104789 / BI429)).